Consider the following 152-residue polypeptide: Nascent polypeptide-associated complex subunit beta (152 aa).

2 disordered regions span residues Ile-19–Asp-39 and Asn-125–Glu-152. Positions Thr-23–Pro-32 are enriched in basic residues. An NAC-A/B domain is found at Ala-36 to Val-101.

The protein belongs to the NAC-beta family. As to quaternary structure, part of the nascent polypeptide-associated complex (NAC), consisting of npc-1/egd2 and npc-2/egd1. NAC associates with ribosomes via npc-2/egd1.

It is found in the cytoplasm. The protein localises to the nucleus. Its function is as follows. Component of the nascent polypeptide-associated complex (NAC), a dynamic component of the ribosomal exit tunnel, protecting the emerging polypeptides from interaction with other cytoplasmic proteins to ensure appropriate nascent protein targeting. The NAC complex also promotes mitochondrial protein import by enhancing productive ribosome interactions with the outer mitochondrial membrane and blocks the inappropriate interaction of ribosomes translating non-secretory nascent polypeptides with translocation sites in the membrane of the endoplasmic reticulum. Npc-2/egd1 may act as a transcription factor that exert a negative effect on the expression of several genes that are transcribed by RNA polymerase II. The protein is Nascent polypeptide-associated complex subunit beta (npc-2) of Neurospora crassa (strain ATCC 24698 / 74-OR23-1A / CBS 708.71 / DSM 1257 / FGSC 987).